The chain runs to 382 residues: MSTYTRPVMLLLSGLLLLTLAIAVLNTLVPLWLAQEHMSTWQVGVVSSSYFTGNLVGTLLTGYVIKRIGFNRSYYLSSFIFAAGCAGLGLMIGFWSWLAWRFVAGVGCAMIWVVVESALMCSGTSRNRGRLLAAYMMVYYVGTFLGQLLVSKVSTELMSVLPWVTGLTLAGILPLLFTRVLNQQAENHDSTSITAMLKLRQARLGVNGCIISGIVLGSLYGLMPLYLNHKGVSNASIGFWMAVLVSAGILGQWPIGRLADKFGRLLVLRVQVFVVILGSIAMLSQAAMAPALFILGAAGFTLYPVAMAWACEKVEHHQLVAMNQALLLSYTVGSLLGPSFSAMLMQNFSDNLLFIMIASVSFIYLLMLLRNAGHTPKPVAHV.

A run of 12 helical transmembrane segments spans residues 14–34 (GLLL…LWLA), 45–65 (VVSS…GYVI), 79–99 (FIFA…SWLA), 102–122 (FVAG…LMCS), 131–151 (LLAA…LLVS), 157–177 (LMSV…PLLF), 204–224 (LGVN…GLMP), 235–255 (ASIG…QWPI), 270–290 (VQVF…AMAP), 291–311 (ALFI…AWAC), 325–345 (ALLL…AMLM), and 348–368 (FSDN…LLML).

The protein belongs to the major facilitator superfamily. YcaD (TC 2.A.1.26) family.

It localises to the cell inner membrane. This is an uncharacterized protein from Shigella flexneri serotype 5b (strain 8401).